The following is a 228-amino-acid chain: Putative elongation factor Tu-like protein (228 aa).

One can recognise a tr-type G domain in the interval 6 to 212; it reads KPHINVGTIG…LPIREKDNPF (207 aa). A G1 region spans residues 15 to 22; the sequence is GHVDHGKT. Positions 59 to 63 are G2; it reads GITIS. Residues 80 to 83 form a G3 region; sequence DCPG. Positions 135-138 are G4; that stretch reads NKCD. The G5 stretch occupies residues 173-175; the sequence is SAV.

The protein belongs to the TRAFAC class translation factor GTPase superfamily. Classic translation factor GTPase family. EF-Tu/EF-1A subfamily.

The polypeptide is Putative elongation factor Tu-like protein (Ehrlichia ruminantium (strain Welgevonden)).